A 196-amino-acid polypeptide reads, in one-letter code: Alpha-crystallin A chain (196 aa).

An N-acetylmethionine modification is found at Met-1. The segment at 1 to 63 (MDVTIQHPWF…RTVLDSGISE (63 aa)) is required for complex formation with BFSP1 and BFSP2. At Gln-6 the chain carries Deamidated glutamine; partial. Ser-45 carries the phosphoserine modification. Position 50 is a deamidated glutamine; partial (Gln-50). The 110-residue stretch at 76-185 (HAGNPKNNPG…GHSERAIPVS (110 aa)) folds into the sHSP domain. 2 positions are modified to N6-acetyllysine: Lys-93 and Lys-122. His-123 serves as a coordination point for Zn(2+). Position 124 is a deamidated asparagine; partial (Asn-124). Glu-125 and His-130 together coordinate Zn(2+). Residue Ser-145 is modified to Phosphoserine. At Asn-146 the chain carries Deamidated asparagine; partial. The tract at residues 168-196 (KVQSGLDAGHSERAIPVSREEKPSSAPSS) is disordered. Residue Gln-170 is modified to Deamidated glutamine; partial. The span at 176 to 190 (GHSERAIPVSREEKP) shows a compositional bias: basic and acidic residues. His-177 is a Zn(2+) binding site. Ser-185 carries an O-linked (GlcNAc) serine glycan.

The protein belongs to the small heat shock protein (HSP20) family. As to quaternary structure, heteropolymer composed of three CRYAA and one CRYAB subunits. Inter-subunit bridging via zinc ions enhances stability, which is crucial as there is no protein turn over in the lens. Can also form homodimers and homotetramers (dimers of dimers) which serve as the building blocks of homooligomers. Within homooligomers, the zinc-binding motif is created from residues of 3 different molecules. His-123 and Glu-125 from one molecule are ligands of the zinc ion, and His-130 and His-177 residues from additional molecules complete the site with tetrahedral coordination geometry. Part of a complex required for lens intermediate filament formation composed of BFSP1, BFSP2 and CRYAA. In terms of processing, acetylation at Lys-93 may increase chaperone activity. Undergoes age-dependent proteolytical cleavage at the C-terminus. Cleavage by m-calpain produces specifically alpha-crystallin A(1-162), cleavage by Capn3/Lp82 produces specifically alpha-crystallin A(1-168) which is the major truncated form during normal maturation and induced cataract formation. In terms of tissue distribution, highly expressed in eye lens. Also expressed in non-lenticular tissues such as brain, spleen, liver, lung, skin, small intestine and a several epithelial and fibroblast cell lines with highest levels in spleen.

It is found in the cytoplasm. The protein resides in the nucleus. Contributes to the transparency and refractive index of the lens. Acts as a chaperone, preventing aggregation of various proteins under a wide range of stress conditions. Required for the correct formation of lens intermediate filaments as part of a complex composed of BFSP1, BFSP2 and CRYAA. In terms of biological role, inhibits bacterial growth in the lens. The protein is Alpha-crystallin A chain (Cryaa) of Rattus norvegicus (Rat).